Reading from the N-terminus, the 508-residue chain is tRNA-2-methylthio-N(6)-dimethylallyladenosine synthase (508 aa).

Residues 1 to 21 (MNEEQRKASGQVSSSDKKSEK) form a disordered region. In terms of domain architecture, MTTase N-terminal spans 65–183 (RKFYIRTYGC…LPELLSECYL (119 aa)). The [4Fe-4S] cluster site is built by Cys74, Cys110, Cys144, Cys220, Cys224, and Cys227. Residues 206–436 (RQGKIKGWVN…NALVNEISAK (231 aa)) enclose the Radical SAM core domain. Positions 439–502 (KEYEGQTVEV…TWSLDGEMVG (64 aa)) constitute a TRAM domain.

The protein belongs to the methylthiotransferase family. MiaB subfamily. In terms of assembly, monomer. [4Fe-4S] cluster is required as a cofactor.

The protein resides in the cytoplasm. It carries out the reaction N(6)-dimethylallyladenosine(37) in tRNA + (sulfur carrier)-SH + AH2 + 2 S-adenosyl-L-methionine = 2-methylsulfanyl-N(6)-dimethylallyladenosine(37) in tRNA + (sulfur carrier)-H + 5'-deoxyadenosine + L-methionine + A + S-adenosyl-L-homocysteine + 2 H(+). Functionally, catalyzes the methylthiolation of N6-(dimethylallyl)adenosine (i(6)A), leading to the formation of 2-methylthio-N6-(dimethylallyl)adenosine (ms(2)i(6)A) at position 37 in tRNAs that read codons beginning with uridine. The chain is tRNA-2-methylthio-N(6)-dimethylallyladenosine synthase from Bacillus pumilus (strain SAFR-032).